Consider the following 567-residue polypeptide: Multidrug and toxin extrusion protein 1 (567 aa).

N-acetylmethionine is present on Met-1. Topologically, residues 1 to 37 (MERTEESAPGPGGADAASERRGLRCLLLPGFLEELRA) are cytoplasmic. Ser-18 is subject to Phosphoserine. Residues 38-58 (LLVLAGPAFLAQLMMFLISFI) traverse the membrane as a helical segment. The Extracellular portion of the chain corresponds to 59–72 (SSVFCGHLGKLELD). The chain crosses the membrane as a helical span at residues 73–93 (AVTLAIAVINVTGISVGHGLS). Topologically, residues 94 to 120 (SACDTLISQTYGSQNLKHVGVILQRGT) are cytoplasmic. A helical membrane pass occupies residues 121–141 (LILLLCCFPCWALFINTEQIL). At 142–152 (LLFRQDPDVSR) the chain is on the extracellular side. The chain crosses the membrane as a helical span at residues 153–173 (LTQTYVMIFIPALPAAFLYTL). Topologically, residues 174–187 (QVKYLLNQGIVLPQ) are cytoplasmic. Residues 188–208 (IMTGIAANLVNALANYVFLYH) traverse the membrane as a helical segment. Residues 209 to 216 (LHLGVMGS) are Extracellular-facing. Residues 217-237 (ALANTISQFALAIFLFLYILW) traverse the membrane as a helical segment. The Cytoplasmic segment spans residues 238 to 257 (RRLHQATWGGWSWECLQDWA). A helical transmembrane segment spans residues 258-277 (SFLRLAIPSMLMLCIEWWAY). The Extracellular segment spans residues 278–295 (EVGSFLSGILGMVELGAQ). A helical transmembrane segment spans residues 296-316 (SITYELAIIVYMIPSGFSVAA). Over 317–336 (NVRVGNALGAGNIDQAKKSS) the chain is Cytoplasmic. Residues 337-357 (AISLIVTELFAVTFCVLLLGC) traverse the membrane as a helical segment. Residues 358–370 (KDLVGYIFTTDRD) lie on the Extracellular side of the membrane. A helical membrane pass occupies residues 371–391 (IVALVAQVIPIYAVSHLFEGL). Topologically, residues 392–408 (ACTCGGILRGTGNQKVG) are cytoplasmic. The chain crosses the membrane as a helical span at residues 409–429 (AIVNAIGYYVIGLPIGIALMF). Residues 430 to 437 (AAKLGVIG) are Extracellular-facing. Residues 438–458 (LWSGIIICTTCQTTCFLAFIA) traverse the membrane as a helical segment. Over 459 to 543 (RLNWKRACQQ…LSGKQLALRR (85 aa)) the chain is Cytoplasmic. A helical transmembrane segment spans residues 544 to 564 (GLLLLGVVLVLVGGILVRVYI). Over 565–567 (RIE) the chain is Extracellular.

It belongs to the multi antimicrobial extrusion (MATE) (TC 2.A.66.1) family. Predominantly expressed in kidney and liver. Also expressed in various cells, including brain glia-like cells and capillaries, pancreatic duct cells, urinary bladder epithelium, adrenal gland cortex, heart, stomach, small intestine, thyroid gland, testes, alpha cells of the islets of Langerhans, Leydig cells, and vitamin A-storing Ito cells. Expressed in heart, stomach, small intestine, bladder, thyroid gland, adrenal gland and testes (at protein level).

The protein localises to the cell membrane. Its subcellular location is the apical cell membrane. The catalysed reaction is thiamine(out) + H(+)(in) = thiamine(in) + H(+)(out). It catalyses the reaction estrone 3-sulfate(in) + H(+)(out) = estrone 3-sulfate(out) + H(+)(in). The enzyme catalyses creatinine(in) + H(+)(out) = creatinine(out) + H(+)(in). It carries out the reaction agmatine(in) + H(+)(out) = agmatine(out) + H(+)(in). Multidrug efflux pump that functions as a H(+)/organic cation antiporter. Plays a physiological role in the excretion of cationic compounds including endogenous metabolites, drugs, toxins through the kidney and liver, into urine and bile respectively. Mediates the efflux of endogenous compounds such as creatinine, vitamin B1/thiamine, agmatine and estrone-3-sulfate. May also contribute to regulate the transport of cationic compounds in testis across the blood-testis-barrier. In Mus musculus (Mouse), this protein is Multidrug and toxin extrusion protein 1 (Slc47a1).